The sequence spans 550 residues: (+)-germacrene D synthase (550 aa).

Mg(2+) is bound by residues aspartate 304, aspartate 308, and glutamate 455. The DDXXD motif signature appears at 304–308 (DDIYD).

This sequence belongs to the terpene synthase family. Tpsa subfamily. Requires Mg(2+) as cofactor. Mn(2+) serves as cofactor. Co(2+) is required as a cofactor. It depends on Ni(2+) as a cofactor.

The protein localises to the cytoplasm. The catalysed reaction is (2E,6E)-farnesyl diphosphate = (+)-germacrene D + diphosphate. It participates in secondary metabolite biosynthesis; terpenoid biosynthesis. Its function is as follows. Involved in the biosynthesis of germacrene D. Can use farnesyl diphosphate as substrate, but not geranyl diphosphate. Produces mainly (+)-germacrene D along with germacrene B and a number of minor by-products. The protein is (+)-germacrene D synthase of Zingiber officinale (Ginger).